A 216-amino-acid chain; its full sequence is Uracil phosphoribosyltransferase (216 aa).

GTP is bound by residues Arg-32, Arg-41, 75 to 78 (LGKI), and Lys-77. Position 85 (Arg-85) interacts with 5-phospho-alpha-D-ribose 1-diphosphate. Residue Arg-102 participates in GTP binding. Arg-110 serves as a coordination point for 5-phospho-alpha-D-ribose 1-diphosphate. Arg-131 lines the GTP pocket. 5-phospho-alpha-D-ribose 1-diphosphate is bound by residues Asp-137 and 137–145 (DPMLATGGS). Tyr-201 lines the D-ribose 5-phosphate pocket. Residues Leu-202 and 207–209 (GDF) each bind uracil. Asp-208 serves as a coordination point for 5-phospho-alpha-D-ribose 1-diphosphate.

It belongs to the UPRTase family. Requires Mg(2+) as cofactor.

The catalysed reaction is UMP + diphosphate = 5-phospho-alpha-D-ribose 1-diphosphate + uracil. It functions in the pathway pyrimidine metabolism; UMP biosynthesis via salvage pathway; UMP from uracil: step 1/1. Allosterically activated by GTP. In terms of biological role, catalyzes the conversion of uracil and 5-phospho-alpha-D-ribose 1-diphosphate (PRPP) to UMP and diphosphate. The sequence is that of Uracil phosphoribosyltransferase (FUR1) from Lachancea kluyveri (Yeast).